The chain runs to 557 residues: Dihydroxy-acid dehydratase 1 (557 aa).

C50 is a [2Fe-2S] cluster binding site. Residue D82 coordinates Mg(2+). A [2Fe-2S] cluster-binding site is contributed by C123. D124 and K125 together coordinate Mg(2+). At K125 the chain carries N6-carboxylysine. A [2Fe-2S] cluster-binding site is contributed by C195. Position 447 (E447) interacts with Mg(2+). S473 serves as the catalytic Proton acceptor.

Belongs to the IlvD/Edd family. In terms of assembly, homodimer. It depends on [2Fe-2S] cluster as a cofactor. Requires Mg(2+) as cofactor.

It carries out the reaction (2R)-2,3-dihydroxy-3-methylbutanoate = 3-methyl-2-oxobutanoate + H2O. It catalyses the reaction (2R,3R)-2,3-dihydroxy-3-methylpentanoate = (S)-3-methyl-2-oxopentanoate + H2O. It participates in amino-acid biosynthesis; L-isoleucine biosynthesis; L-isoleucine from 2-oxobutanoate: step 3/4. Its pathway is amino-acid biosynthesis; L-valine biosynthesis; L-valine from pyruvate: step 3/4. Functionally, functions in the biosynthesis of branched-chain amino acids. Catalyzes the dehydration of (2R,3R)-2,3-dihydroxy-3-methylpentanoate (2,3-dihydroxy-3-methylvalerate) into 2-oxo-3-methylpentanoate (2-oxo-3-methylvalerate) and of (2R)-2,3-dihydroxy-3-methylbutanoate (2,3-dihydroxyisovalerate) into 2-oxo-3-methylbutanoate (2-oxoisovalerate), the penultimate precursor to L-isoleucine and L-valine, respectively. The protein is Dihydroxy-acid dehydratase 1 of Cupriavidus pinatubonensis (strain JMP 134 / LMG 1197) (Cupriavidus necator (strain JMP 134)).